The chain runs to 291 residues: MAKISAAQVKELRDKTGVGMMDAKKALVAVEGDMEKAIDFLREKGMAKAAKKSDRVAAEGLANVAVNGNKAVIVEVNAETDFVAQNDQFKALVKHIADVIAENTPADVEAALQLKTDKGTLNDELIEATQVIGEKISLRRFEVVEKADADNFGAYLHDGGRIAVLSVVEGADEATAKDVAMHVAAINPKYVNRDEVPEAEVAHEKEVLTEEAKNEGKPEKIIEKMVAGRLNKFFAEVALDDQDFVKDPDLTVAKYVASKNGKVKSFVRYEVGEGIEKKEENFAEEVMSQIK.

The segment at 80–83 (TDFV) is involved in Mg(2+) ion dislocation from EF-Tu.

This sequence belongs to the EF-Ts family.

The protein resides in the cytoplasm. Its function is as follows. Associates with the EF-Tu.GDP complex and induces the exchange of GDP to GTP. It remains bound to the aminoacyl-tRNA.EF-Tu.GTP complex up to the GTP hydrolysis stage on the ribosome. This is Elongation factor Ts from Ligilactobacillus salivarius (strain UCC118) (Lactobacillus salivarius).